Consider the following 200-residue polypeptide: Ribonuclease HII (200 aa).

In terms of domain architecture, RNase H type-2 spans 1–200; it reads MRYGGVDEAG…EINKKLTDFI (200 aa). Residues Asp7, Glu8, and Asp99 each coordinate a divalent metal cation.

It belongs to the RNase HII family. Requires Mn(2+) as cofactor. It depends on Mg(2+) as a cofactor.

It is found in the cytoplasm. The enzyme catalyses Endonucleolytic cleavage to 5'-phosphomonoester.. Endonuclease that specifically degrades the RNA of RNA-DNA hybrids. The sequence is that of Ribonuclease HII from Nanoarchaeum equitans (strain Kin4-M).